Consider the following 567-residue polypeptide: Urease subunit alpha (567 aa).

The region spanning 129–567 (GGIDTHIHFI…LPMAQRYFLF (439 aa)) is the Urease domain. Residues histidine 134, histidine 136, and lysine 217 each coordinate Ni(2+). Lysine 217 is subject to N6-carboxylysine. Histidine 219 contributes to the substrate binding site. Ni(2+) contacts are provided by histidine 246 and histidine 272. Histidine 320 acts as the Proton donor in catalysis. Aspartate 360 is a binding site for Ni(2+).

This sequence belongs to the metallo-dependent hydrolases superfamily. Urease alpha subunit family. Heterotrimer of UreA (gamma), UreB (beta) and UreC (alpha) subunits. Three heterotrimers associate to form the active enzyme. Ni cation serves as cofactor. Post-translationally, carboxylation allows a single lysine to coordinate two nickel ions.

It localises to the cytoplasm. The enzyme catalyses urea + 2 H2O + H(+) = hydrogencarbonate + 2 NH4(+). It participates in nitrogen metabolism; urea degradation; CO(2) and NH(3) from urea (urease route): step 1/1. This Delftia acidovorans (strain DSM 14801 / SPH-1) protein is Urease subunit alpha.